The primary structure comprises 708 residues: tRNA(Met) cytidine acetyltransferase TmcA (708 aa).

ATP-binding positions include Gln-189, 215-224 (GRGKTSALGL), and Arg-357. The N-acetyltransferase domain maps to 398 to 574 (PECVEQPERL…YSLLMVRGEH (177 aa)). Acetyl-CoA contacts are provided by residues 502 to 504 (IAV) and 509 to 515 (QRQGIGS).

Belongs to the RNA cytidine acetyltransferase family. TmcA subfamily.

The protein localises to the cytoplasm. It catalyses the reaction cytidine(34) in elongator tRNA(Met) + acetyl-CoA + ATP + H2O = N(4)-acetylcytidine(34) in elongator tRNA(Met) + ADP + phosphate + CoA + H(+). Functionally, catalyzes the formation of N(4)-acetylcytidine (ac(4)C) at the wobble position of tRNA(Met), by using acetyl-CoA as an acetyl donor and ATP (or GTP). The protein is tRNA(Met) cytidine acetyltransferase TmcA of Vibrio cholerae serotype O1 (strain ATCC 39315 / El Tor Inaba N16961).